Consider the following 317-residue polypeptide: MHHFNRAKKAKNNEFFTLIDEIENEVINYQKQFANKTIFCNCNDGKNSHFFQFFQTNFNQLQLKKLIGFSFNNLSQADKFTFDGNKVTKTKLKGNGDFSSDESIEVLKQADIVVTNPPFSLFQSFIDLLIQHNKQFLVLGLNAAVSYNHIFTYFKTNKLWFGYTVNKTMSFSVNSDYQLYNPKTSNFFTKNGKCFQKIAGISWFTNLGKPHYNPFLNTNCFYKNNEKNYPKFDWYDAIYVNKIKNIPMDWNGLMGVPLTFLNCYNPKQFELVDCLANPYATLDTLKTNAFVKLNQGDVRNVNGKRRYVRVIIKKQQI.

It belongs to the N(4)/N(6)-methyltransferase family.

It catalyses the reaction a 2'-deoxyadenosine in DNA + S-adenosyl-L-methionine = an N(6)-methyl-2'-deoxyadenosine in DNA + S-adenosyl-L-homocysteine + H(+). Probably recognizes the double-stranded sequence 5'-CTAT-3' and methylates A-3 on only one strand; as the bacterial DNA is methylated on this sequence and this is the only type II methylase in the genome, it is probably responsible for all of the methylation on this site in the genome. This is Type II methyltransferase M.MgeORF184P from Mycoplasma genitalium (strain ATCC 33530 / DSM 19775 / NCTC 10195 / G37) (Mycoplasmoides genitalium).